The following is a 149-amino-acid chain: Large ribosomal subunit protein bL9 (149 aa).

It belongs to the bacterial ribosomal protein bL9 family.

Functionally, binds to the 23S rRNA. This is Large ribosomal subunit protein bL9 from Helicobacter pylori (strain P12).